Consider the following 522-residue polypeptide: Nitrogen fixation protein VnfA (522 aa).

The a domain stretch occupies residues 22-183; that stretch reads LLYEMSQIAT…AQAVELYLVE (162 aa). The GAF domain occupies 35–177; it reads DLSSIISILL…ILATTTAQAV (143 aa). Residues 210-439 enclose the Sigma-54 factor interaction domain; it reads IIGNSKPMLE…LENVIERAML (230 aa). Residues 238–245 and 301–310 contribute to the ATP site; these read GESGVGKE and AAGGTIFLDE. Positions 493–512 form a DNA-binding region, H-T-H motif; sequence MTEAATHLGLTARVLGLRMG.

Functionally, required for the expression of the V-dependent nitrogen fixation system in Azotobacter vinelandii. It is required for the regulation of nitrogenase 2 transcription. Interacts with sigma-54. This is Nitrogen fixation protein VnfA (vnfA) from Azotobacter vinelandii.